We begin with the raw amino-acid sequence, 524 residues long: Citrate exporter 1 (524 aa).

Positions 1–49 (MSSTTSSSRSDLEKVPVPQVTPRDSDSDKGSLSPEPSTLEAQSSEKPPH) are disordered. The segment covering 34 to 45 (PEPSTLEAQSSE) has biased composition (polar residues). A helical transmembrane segment spans residues 60–80 (MVCIVSLAAIFSPLSSNIYFP). Asparagine 90 carries an N-linked (GlcNAc...) asparagine glycan. The next 5 membrane-spanning stretches (helical) occupy residues 95–115 (LATLTITVYMIVQGLAPSFWG), 125–145 (PVFIGTFIVYLVANIALAESK), 155–175 (ALQAAGSAATISIGAGVIGDI), 186–206 (GIFGGVRMLGQGIGPVFGGIF), and 215–235 (IFWFLTIAGGVSLLSILVLLP). Asparagine 244 carries N-linked (GlcNAc...) asparagine glycosylation. The next 6 membrane-spanning stretches (helical) occupy residues 296–316 (VFITLFFGSIVYTVWSMVTSS), 332–352 (IGLTFLGNGFGCMSGSYLVGY), 395–415 (TWWVIAIFIVTVALYGVSLRT), 417–437 (LAVPIILQYFIAFCSTGLFTI), 459–479 (LMRCLLGAGGVAIVQPILDAL), and 481–501 (PDYTFLLLAGITLVMTPLLYV).

The protein belongs to the major facilitator superfamily.

It localises to the cell membrane. It carries out the reaction citrate(in) = citrate(out). Functionally, transmembrane transporter that exports citrate across the cell membrane. This Aspergillus niger (strain ATCC 1015 / CBS 113.46 / FGSC A1144 / LSHB Ac4 / NCTC 3858a / NRRL 328 / USDA 3528.7) protein is Citrate exporter 1.